The sequence spans 782 residues: Endonuclease MutS2 (782 aa).

Residue 336-343 (GPNTGGKT) participates in ATP binding. One can recognise a Smr domain in the interval 707–782 (LDLRGYRYEE…GFGVTVAELK (76 aa)).

The protein belongs to the DNA mismatch repair MutS family. MutS2 subfamily. In terms of assembly, homodimer. Binds to stalled ribosomes, contacting rRNA.

Its function is as follows. Endonuclease that is involved in the suppression of homologous recombination and thus may have a key role in the control of bacterial genetic diversity. In terms of biological role, acts as a ribosome collision sensor, splitting the ribosome into its 2 subunits. Detects stalled/collided 70S ribosomes which it binds and splits by an ATP-hydrolysis driven conformational change. Acts upstream of the ribosome quality control system (RQC), a ribosome-associated complex that mediates the extraction of incompletely synthesized nascent chains from stalled ribosomes and their subsequent degradation. Probably generates substrates for RQC. This chain is Endonuclease MutS2, found in Staphylococcus epidermidis (strain ATCC 35984 / DSM 28319 / BCRC 17069 / CCUG 31568 / BM 3577 / RP62A).